A 267-amino-acid polypeptide reads, in one-letter code: Phosphate import ATP-binding protein PstB 2 (267 aa).

The ABC transporter domain maps to 21-262 (LTTKDLHVYY…AKCQSTSDYV (242 aa)). 53–60 (GPSGCGKS) serves as a coordination point for ATP.

The protein belongs to the ABC transporter superfamily. Phosphate importer (TC 3.A.1.7) family. As to quaternary structure, the complex is composed of two ATP-binding proteins (PstB), two transmembrane proteins (PstC and PstA) and a solute-binding protein (PstS).

Its subcellular location is the cell membrane. It carries out the reaction phosphate(out) + ATP + H2O = ADP + 2 phosphate(in) + H(+). Its function is as follows. Part of the ABC transporter complex PstSACB involved in phosphate import. Responsible for energy coupling to the transport system. The sequence is that of Phosphate import ATP-binding protein PstB 2 from Streptococcus agalactiae serotype Ia (strain ATCC 27591 / A909 / CDC SS700).